Reading from the N-terminus, the 376-residue chain is Lipid-A-disaccharide synthase (376 aa).

The protein belongs to the LpxB family.

It catalyses the reaction a lipid X + a UDP-2-N,3-O-bis[(3R)-3-hydroxyacyl]-alpha-D-glucosamine = a lipid A disaccharide + UDP + H(+). Its pathway is bacterial outer membrane biogenesis; LPS lipid A biosynthesis. Condensation of UDP-2,3-diacylglucosamine and 2,3-diacylglucosamine-1-phosphate to form lipid A disaccharide, a precursor of lipid A, a phosphorylated glycolipid that anchors the lipopolysaccharide to the outer membrane of the cell. This is Lipid-A-disaccharide synthase from Hydrogenovibrio crunogenus (strain DSM 25203 / XCL-2) (Thiomicrospira crunogena).